A 535-amino-acid chain; its full sequence is Sucrose transport protein SUT5 (535 aa).

At 1-53 (MEEGRRGDREGKSAAGWTALSTTKTTLEEKRRLQANGSVGGDAGTSGFRRIVR) the chain is on the cytoplasmic side. The chain crosses the membrane as a helical span at residues 54–74 (LFFACMVAGGIQYGWALQLSL). Over 75–87 (LSPYSQTLGISHS) the chain is Extracellular. The chain crosses the membrane as a helical span at residues 88-108 (YVSLTWICGPIAGFVVQPIVG). Residues 109 to 122 (YYSDRCTMKMGRRR) lie on the Cytoplasmic side of the membrane. The helical transmembrane segment at 123-143 (PFILVGCLIICISVMIIGFSA) threads the bilayer. At 144–163 (DIGRHLGDTKEHCSTYTGPR) the chain is on the extracellular side. The chain crosses the membrane as a helical span at residues 164-184 (WSAAMVYIVGFWFLDFANNTV). The Cytoplasmic segment spans residues 185 to 203 (QGPARAMMADLSAGHHGPN). Residues 204 to 224 (VGQSIFSLWMAIGSVLGYLSG) traverse the membrane as a helical segment. Residues 225–249 (ANGKWHEWFPWLKTAACCDACANLK) are Extracellular-facing. A helical membrane pass occupies residues 250 to 270 (GAFFTAVLLIVVSMTVTMYLA). The Cytoplasmic segment spans residues 271 to 302 (DEMPLDKQDVDTSGGGGCAVFVDLFKSLRNLP). The helical transmembrane segment at 303–323 (PAMFKVLAVTAVTWLSWFPFI) threads the bilayer. At 324-354 (QYNTDWMGREIYHGEPQGTAAKADVYDAGVR) the chain is on the extracellular side. Residues 355-375 (EGAMGLLFCSVALGVTSFVIP) form a helical membrane-spanning segment. The Cytoplasmic segment spans residues 376-384 (KLCRRLTSK). Residues 385–405 (VVWSISNFLVFALMAVMVAVG) form a helical membrane-spanning segment. The Extracellular segment spans residues 406 to 429 (MVSMRGYRPSLAAGLTGPDPTLKA). A helical membrane pass occupies residues 430 to 450 (VALVVFALIGIPQAVLFSVPW). At 451 to 465 (AVASEVTAEEGGGQG) the chain is on the cytoplasmic side. The chain crosses the membrane as a helical span at residues 466-486 (LAIGVLNIAIVVPQLVIALTA). Topologically, residues 487-498 (GPIDGAFNKGNT) are extracellular. The helical transmembrane segment at 499–519 (PAFGIGGAFAFICGVLALIWL) threads the bilayer. The Cytoplasmic portion of the chain corresponds to 520–535 (PKTRGVSNAAVVAGGH).

It belongs to the glycoside-pentoside-hexuronide (GPH) cation symporter transporter (TC 2.A.2.4) family. In terms of assembly, homodimer. Widely expressed. Highest expression in sink leaves and lowest in germinating seeds.

The protein resides in the cell membrane. It functions in the pathway glycan biosynthesis; sucrose metabolism. Responsible for the transport of sucrose into the cell, with the concomitant uptake of protons (symport system). Can also transport other glucosides such as maltose, arbutin, salicin, helicin, alpha-phenylglucoside and beta-phenylglucoside. The sequence is that of Sucrose transport protein SUT5 (SUT5) from Oryza sativa subsp. japonica (Rice).